We begin with the raw amino-acid sequence, 314 residues long: Ornithine carbamoyltransferase (314 aa).

Carbamoyl phosphate is bound by residues 58-61, Gln85, Arg109, and 136-139; these read STRT and HPLQ. Residues Asn168, Asp232, and 236–237 contribute to the L-ornithine site; that span reads SM. Residues 272–273 and Arg300 contribute to the carbamoyl phosphate site; that span reads CL.

It belongs to the aspartate/ornithine carbamoyltransferase superfamily. OTCase family.

The protein localises to the cytoplasm. It catalyses the reaction carbamoyl phosphate + L-ornithine = L-citrulline + phosphate + H(+). It functions in the pathway amino-acid biosynthesis; L-arginine biosynthesis; L-arginine from L-ornithine and carbamoyl phosphate: step 1/3. Its function is as follows. Reversibly catalyzes the transfer of the carbamoyl group from carbamoyl phosphate (CP) to the N(epsilon) atom of ornithine (ORN) to produce L-citrulline. This chain is Ornithine carbamoyltransferase, found in Hyperthermus butylicus (strain DSM 5456 / JCM 9403 / PLM1-5).